The primary structure comprises 738 residues: DNA topoisomerase 4 subunit A (738 aa).

The region spanning 32 to 496 is the Topo IIA-type catalytic domain; the sequence is LPDVRDGLKP…SFEEVTLTNQ (465 aa). The active-site O-(5'-phospho-DNA)-tyrosine intermediate is the Y120.

The protein belongs to the type II topoisomerase GyrA/ParC subunit family. ParC type 1 subfamily. In terms of assembly, heterotetramer composed of ParC and ParE.

Its subcellular location is the cell membrane. The enzyme catalyses ATP-dependent breakage, passage and rejoining of double-stranded DNA.. Functionally, topoisomerase IV is essential for chromosome segregation. It relaxes supercoiled DNA. Performs the decatenation events required during the replication of a circular DNA molecule. The sequence is that of DNA topoisomerase 4 subunit A from Rickettsia conorii (strain ATCC VR-613 / Malish 7).